Reading from the N-terminus, the 294-residue chain is Thymidylate synthase (294 aa).

DUMP-binding positions include R31 and 156–157 (RR). The active-site Nucleophile is the C176. DUMP-binding positions include 196–199 (RSAD), N207, and 237–239 (HIY). D199 is a binding site for (6R)-5,10-methylene-5,6,7,8-tetrahydrofolate. Position 293 (A293) interacts with (6R)-5,10-methylene-5,6,7,8-tetrahydrofolate.

Belongs to the thymidylate synthase family. In terms of assembly, homodimer.

It catalyses the reaction dUMP + (6R)-5,10-methylene-5,6,7,8-tetrahydrofolate = 7,8-dihydrofolate + dTMP. It participates in pyrimidine metabolism; dTTP biosynthesis. This Saimiri sciureus (Common squirrel monkey) protein is Thymidylate synthase (70).